Consider the following 226-residue polypeptide: Large ribosomal subunit protein uL1 (226 aa).

Belongs to the universal ribosomal protein uL1 family. In terms of assembly, part of the 50S ribosomal subunit.

Binds directly to 23S rRNA. The L1 stalk is quite mobile in the ribosome, and is involved in E site tRNA release. Functionally, protein L1 is also a translational repressor protein, it controls the translation of the L11 operon by binding to its mRNA. The polypeptide is Large ribosomal subunit protein uL1 (Selenomonas ruminantium).